The sequence spans 173 residues: Nicotinamide-nucleotide adenylyltransferase (173 aa).

It belongs to the archaeal NMN adenylyltransferase family.

The protein localises to the cytoplasm. The catalysed reaction is beta-nicotinamide D-ribonucleotide + ATP + H(+) = diphosphate + NAD(+). The protein operates within cofactor biosynthesis; NAD(+) biosynthesis; NAD(+) from nicotinamide D-ribonucleotide: step 1/1. The sequence is that of Nicotinamide-nucleotide adenylyltransferase (ffdC) from Methanolobus tindarius.